We begin with the raw amino-acid sequence, 380 residues long: Large ribosomal subunit protein mL38 (380 aa).

Residues 1 to 26 (MAAPWWRVVLNGSRNWRGFSTSAALS) constitute a mitochondrion transit peptide. Positions 101–122 (QQLLERKRVLRELRTSVEEERA) form a coiled coil.

The protein belongs to the phosphatidylethanolamine-binding protein family. Mitochondrion-specific ribosomal protein mL38 subfamily. As to quaternary structure, component of the mitochondrial ribosome large subunit (39S) which comprises a 16S rRNA and about 50 distinct proteins.

It localises to the mitochondrion. This is Large ribosomal subunit protein mL38 (MRPL38) from Bos taurus (Bovine).